A 900-amino-acid polypeptide reads, in one-letter code: Bifunctional uridylyltransferase/uridylyl-removing enzyme (900 aa).

Residues 1–342 (MPQVDPELFD…PCEQPVQIQP (342 aa)) are uridylyltransferase. The segment at 343-705 (LNSRFQLRDG…TTQREFESGS (363 aa)) is uridylyl-removing. The region spanning 461–583 (VDAHTLNLIK…VGDQTHLDYL (123 aa)) is the HD domain. ACT domains lie at 706 to 789 (QIFI…IIQR) and 816 to 891 (VLEV…DNGR).

It belongs to the GlnD family. It depends on Mg(2+) as a cofactor.

It catalyses the reaction [protein-PII]-L-tyrosine + UTP = [protein-PII]-uridylyl-L-tyrosine + diphosphate. It carries out the reaction [protein-PII]-uridylyl-L-tyrosine + H2O = [protein-PII]-L-tyrosine + UMP + H(+). Uridylyltransferase (UTase) activity is inhibited by glutamine, while glutamine activates uridylyl-removing (UR) activity. Its function is as follows. Modifies, by uridylylation and deuridylylation, the PII regulatory proteins (GlnB and homologs), in response to the nitrogen status of the cell that GlnD senses through the glutamine level. Under low glutamine levels, catalyzes the conversion of the PII proteins and UTP to PII-UMP and PPi, while under higher glutamine levels, GlnD hydrolyzes PII-UMP to PII and UMP (deuridylylation). Thus, controls uridylylation state and activity of the PII proteins, and plays an important role in the regulation of nitrogen assimilation and metabolism. This is Bifunctional uridylyltransferase/uridylyl-removing enzyme from Pseudomonas aeruginosa (strain UCBPP-PA14).